The sequence spans 552 residues: Acyl-CoA-dependent acyltransferase MAC1 (552 aa).

This sequence belongs to the trichothecene O-acetyltransferase family.

It participates in secondary metabolite biosynthesis. Acyl-CoA-dependent acyltransferase; part of the gene cluster that mediates the biosynthesis of mannosylerythritol lipids (MELs), surface-active substances that enhance the availability of water-insoluble substrates. Depending on the number of acetyl groups, mannosylerythritol lipids can be differentiated into MEL A (fully acetylated), MEL B and MEL C (monoacetylated at R-6 and R-4, respectively), and the fully deacetylated MEL D. The first step in the pathway is the generation of mannosylerythritol by the glycosyltransferase EMT1 which catalyzes the transfer of GDP-mannose to the C-4 atom of meso-erythritol. This reaction has to be stereospecific, since only mannosyl-D-erythritol is generated. The produced disaccharide is subsequently acylated with fatty acids of various lengths by the acyltransferases MAC1 and MAC2 at positions C-2 and C-3, repectively. The existence of MEL derivatives which carry an acetyl group at C-2 implies that at least MAC1 also accepts acetyl-CoA as a donor. The final step of MEL biosynthesis is the acetylation of the fully acylated mannosylerythritol lipids catalyzed by the acetyl-CoA-dependent acetyltransferase MAT1. MAT1 displays a relaxed regioselectivity and is able to transfer acetylgroups to both positions C-4 and C-6 of the mannosyl moiety. In Pseudozyma antarctica (strain T-34) (Yeast), this protein is Acyl-CoA-dependent acyltransferase MAC1.